The following is a 113-amino-acid chain: Protein INCREASED RESISTANCE TO MYZUS PERSICAE 1 (113 aa).

An FLZ-type zinc finger spans residues 56–100 (DFLKTCSLCNRSLCHHRDIYMYRGNNAFCSLECREKQIKLDEKKA).

The protein belongs to the FLZ family. Interacts with KIN10 and KIN11 via its FLZ-type zinc finger domain. Interacts with KINB3 via its N-terminal part. Interacts with GEBP.

It localises to the nucleus. The protein localises to the cytoplasm. May act as an adapter to facilitate the interaction of SnRK1 complex with effector proteins, conferring tissue- and stimulus-type specific differences in the SnRK1 regulation pathway. In Arabidopsis thaliana (Mouse-ear cress), this protein is Protein INCREASED RESISTANCE TO MYZUS PERSICAE 1.